The following is a 245-amino-acid chain: Pathogenesis-related thaumatin-like protein 3.6 (245 aa).

The N-terminal stretch at 1–19 (GSIPFWIALIASFSVFLQG) is a signal peptide. Disulfide bonds link C33/C226, C74/C84, C89/C95, C142/C215, C148/C198, C156/C166, C170/C179, and C180/C185. An N-linked (GlcNAc...) asparagine glycan is attached at N90. N186 carries N-linked (GlcNAc...) asparagine glycosylation.

It belongs to the thaumatin family. As to expression, mostly expressed in strobili, and, to a lower extent, in roots of seedlings and saplings.

May be involved in disease resistance. This is Pathogenesis-related thaumatin-like protein 3.6 from Cryptomeria japonica (Japanese cedar).